Reading from the N-terminus, the 291-residue chain is 4-hydroxy-tetrahydrodipicolinate synthase (291 aa).

A pyruvate-binding site is contributed by Thr-44. The active-site Proton donor/acceptor is Tyr-132. Lys-160 serves as the catalytic Schiff-base intermediate with substrate. A pyruvate-binding site is contributed by Ile-202.

This sequence belongs to the DapA family. In terms of assembly, homotetramer; dimer of dimers.

It localises to the cytoplasm. The catalysed reaction is L-aspartate 4-semialdehyde + pyruvate = (2S,4S)-4-hydroxy-2,3,4,5-tetrahydrodipicolinate + H2O + H(+). Its pathway is amino-acid biosynthesis; L-lysine biosynthesis via DAP pathway; (S)-tetrahydrodipicolinate from L-aspartate: step 3/4. Catalyzes the condensation of (S)-aspartate-beta-semialdehyde [(S)-ASA] and pyruvate to 4-hydroxy-tetrahydrodipicolinate (HTPA). This chain is 4-hydroxy-tetrahydrodipicolinate synthase, found in Roseobacter denitrificans (strain ATCC 33942 / OCh 114) (Erythrobacter sp. (strain OCh 114)).